The sequence spans 295 residues: Small ribosomal subunit biogenesis GTPase RsgA (295 aa).

The region spanning 65–223 is the CP-type G domain; it reads KNQLVRPPVA…VLDTPGFTAL (159 aa). GTP contacts are provided by residues 114-117 and 165-173; these read NKVD and GPSGVGKSS. Residues C246, C251, H253, and C259 each contribute to the Zn(2+) site.

Belongs to the TRAFAC class YlqF/YawG GTPase family. RsgA subfamily. Monomer. Associates with 30S ribosomal subunit, binds 16S rRNA. Zn(2+) is required as a cofactor.

It is found in the cytoplasm. Functionally, one of several proteins that assist in the late maturation steps of the functional core of the 30S ribosomal subunit. Helps release RbfA from mature subunits. May play a role in the assembly of ribosomal proteins into the subunit. Circularly permuted GTPase that catalyzes slow GTP hydrolysis, GTPase activity is stimulated by the 30S ribosomal subunit. In Caldanaerobacter subterraneus subsp. tengcongensis (strain DSM 15242 / JCM 11007 / NBRC 100824 / MB4) (Thermoanaerobacter tengcongensis), this protein is Small ribosomal subunit biogenesis GTPase RsgA.